A 626-amino-acid polypeptide reads, in one-letter code: MMARPVDPQRSPDPTFRSSTRHSGKLEPMEATAHLLRKQCPSRLNSPAWEASGLHWSSLDSPVGSMQALRPSAQHSWSPEPSVVPDQAWEDTALHQKKLCPLSLTSLPREAAVNFSYRSQTLLQEAQVLQGSPELLPRSPKPSGLQRLAPEEATALPLRRLCHLSLMEKDLGTTAHPRGFPELSHKSTAAASSRQSRPRVRSASLPPRTRLPSGSQAPSAAHPKRLSDLLLTSRAAAPGWRSPDPRSRLAAPPLGSTTLPSTWTAPQSRLTARPSRSPEPQIRESEQRDPQLRRKQQRWKEPLMPRREEKYPLRGTDPLPPGQPQRIPLPGQPLQPQPILTPGQPQKIPTPGQHQPILTPGHSQPIPTPGQPLPPQPIPTPGRPLTPQPIPTPGRPLTPQPIQMPGRPLRLPPPLRLLRPGQPMSPQLRQTQGLPLPQPLLPPGQPKSAGRPLQPLPPGPDARSISDPPAPRSRLPIRLLRGLLARLPGGASPRAAAAAACTTMKGWPAATMTPAETSPTMGPPDASAGFSIGEIAAAESPSATYSATFSCKPSGAASVDLRVPSPKPRALSRSRRYPWRRSADRCAKKPWRSGPRSAQRRNAVSSSTNNSRTKRWATCVRTACCF.

Disordered regions lie at residues 1-29 (MMAR…LEPM), 173-223 (TTAH…AAHP), 236-473 (AAPG…APRS), and 556-612 (AASV…NNSR). 2 stretches are compositionally biased toward polar residues: residues 186-195 (KSTAAASSRQ) and 255-270 (GSTT…QSRL). Residues 281–312 (QIRESEQRDPQLRRKQQRWKEPLMPRREEKYP) are compositionally biased toward basic and acidic residues. Residues 337-346 (QPILTPGQPQ) show a composition bias toward low complexity. Residues 366-399 (IPTPGQPLPPQPIPTPGRPLTPQPIPTPGRPLTP) show a composition bias toward pro residues. The segment covering 416–435 (RLLRPGQPMSPQLRQTQGLP) has biased composition (low complexity). A compositionally biased stretch (pro residues) spans 436-445 (LPQPLLPPGQ). The segment covering 570–579 (ALSRSRRYPW) has biased composition (basic residues). Residues 600–611 (RRNAVSSSTNNS) are compositionally biased toward polar residues.

This sequence belongs to the ALEX family. As to quaternary structure, interacts with the N-terminal region of the XLas isoforms of guanine nucleotide-binding protein G(s) subunit alpha.

It localises to the cell membrane. Its subcellular location is the cell projection. The protein resides in the ruffle. In terms of biological role, may inhibit the adenylyl cyclase-stimulating activity of guanine nucleotide-binding protein G(s) subunit alpha which is produced from the same locus in a different open reading frame. This is Protein ALEX from Homo sapiens (Human).